The chain runs to 671 residues: Kinesin-like protein KIF2C (671 aa).

Positions 1-200 (MIDFDDVAAI…CHPLTMTDPI (200 aa)) are globular. Positions 36–62 (KQKRRSVNSKIPAPKESLRTRSTRMST) are disordered. A Phosphoserine; by AURKB modification is found at Ser-41. Residues 44–47 (SKIP) carry the Microtubule tip localization signal motif. Residues Ser-52, Ser-57, Ser-61, Ser-112, Ser-121, Ser-133, and Ser-138 each carry the phosphoserine modification. Residues 153–184 (EKKAQNSEMRMKRAQEYDSSFPNWEFARMIKE) are negative regulator of microtubule-binding. Cystine bridges form between Cys-191–Cys-233 and Cys-290–Cys-506. In terms of domain architecture, Kinesin motor spans 204–534 (RICVCVRKRP…LRYADRVKEL (331 aa)). ATP is bound at residue 294 to 301 (GQTGSGKT). Phosphoserine occurs at positions 465, 567, and 579. Residues 564-604 (GNLSKEEEELSSQMSSFNEAMTQIRELEERAVEELKEIIQQ) are a coiled coil.

The protein belongs to the TRAFAC class myosin-kinesin ATPase superfamily. Kinesin family. MCAK/KIF2 subfamily. In terms of assembly, interacts with CENPH. Interacts with MTUS2/TIP150; the interaction is direct. Interacts with MAPRE1; the interaction is direct, regulated by phosphorylation and is probably required for targeting to growing microtubule plus ends. Interacts with KIF18B at microtubule tips; this interaction increases the affinity of both partners for microtubule plus ends and is required for robust microtubule depolymerization. Phosphorylation by AURKA or AURKB strongly reduces KIF18B-binding. Post-translationally, phosphorylation by AURKB, regulates association with centromeres and kinetochores and the microtubule depolymerization activity. Ubiquitinated.

The protein resides in the cytoplasm. Its subcellular location is the cytoskeleton. The protein localises to the nucleus. It localises to the chromosome. It is found in the centromere. The protein resides in the kinetochore. In terms of biological role, in complex with KIF18B, constitutes the major microtubule plus-end depolymerizing activity in mitotic cells. Regulates the turnover of microtubules at the kinetochore and functions in chromosome segregation during mitosis. Plays a role in chromosome congression and is required for the lateral to end-on conversion of the chromosome-microtubule attachment. The sequence is that of Kinesin-like protein KIF2C (KIF2C) from Macaca fascicularis (Crab-eating macaque).